A 247-amino-acid chain; its full sequence is Mannose-P-dolichol utilization defect 1 protein (247 aa).

Residue Ala-2 is modified to N-acetylalanine. Transmembrane regions (helical) follow at residues 37–57 (CLKI…SLLV), 74–94 (LSLQ…VYSI), 100–120 (FSSW…CFLV), 128–145 (VKGV…LVLL), 151–171 (LTVV…GRLL), 185–205 (LSAI…FTSI), and 213–233 (MAGT…QLLF). In terms of domain architecture, PQ-loop 1 spans 39–105 (KILLSKGLGL…NNFPFSSWGE (67 aa)). Positions 159 to 216 (ASNVPAVVVGRLLQAATNYHNGHTGQLSAITVFLLFGGSLARIFTSIQETGDPLMAGT) constitute a PQ-loop 2 domain.

The protein belongs to the MPDU1 (TC 2.A.43.3) family.

It localises to the membrane. In terms of biological role, required for normal utilization of mannose-dolichol phosphate (Dol-P-Man) in the synthesis of N-linked and O-linked oligosaccharides and GPI anchors. The chain is Mannose-P-dolichol utilization defect 1 protein (MPDU1) from Homo sapiens (Human).